The following is a 234-amino-acid chain: Matrix protein 1 (234 aa).

Residues 1–103 (MHERSKPKTT…QELAEGGIRM (103 aa)) are disordered. The span at 76 to 96 (CDERSTIGRHGNADERPHQEL) shows a compositional bias: basic and acidic residues. A coiled-coil region spans residues 183 to 234 (PEVSFKERMEAEKKKLKELDDKIYKLRRRLRKMEYKKMGINREIDKLEDSVQ).

Interacts with host HSC70.

The protein resides in the virion. It localises to the host cytoplasm. The protein localises to the host nucleus. Its function is as follows. May play a role in virus replication, from virus entry and uncoating to assembly and budding of the virus particle. Interaction of viral NEP with M1-Hsc70 is thought to promote nuclear export of the viral encapsidated genomes. The chain is Matrix protein 1 from Infectious salmon anemia virus (isolate Atlantic salmon/Norway/810/9/99) (ISAV).